The chain runs to 325 residues: tRNA uridine(34) hydroxylase (325 aa).

The 97-residue stretch at 122–218 (EENRCLVLDV…YGQAMGTGKW (97 aa)) folds into the Rhodanese domain. C178 (cysteine persulfide intermediate) is an active-site residue.

This sequence belongs to the TrhO family.

The catalysed reaction is uridine(34) in tRNA + AH2 + O2 = 5-hydroxyuridine(34) in tRNA + A + H2O. Functionally, catalyzes oxygen-dependent 5-hydroxyuridine (ho5U) modification at position 34 in tRNAs. This Chlamydia felis (strain Fe/C-56) (Chlamydophila felis) protein is tRNA uridine(34) hydroxylase.